The following is a 433-amino-acid chain: O-methyltransferase hasC (433 aa).

S-adenosyl-L-methionine contacts are provided by residues Glu265 and 293–295 (GDF). The active-site Proton acceptor is the His313. A disordered region spans residues 413-433 (SPRANGNGNSAGGLEWESELM).

The protein belongs to the class I-like SAM-binding methyltransferase superfamily. Cation-independent O-methyltransferase family. COMT subfamily.

It functions in the pathway secondary metabolite biosynthesis. In terms of biological role, O-methyltransferase; part of the gene cluster that mediates the biosynthesis of hexadehydro-astechrome (HAS), a tryptophan-derived iron(III)-complex that acts as a virulence factor in infected mice. Within the pathway, hasC, with the cytochrome P450 monooxygenase hasH and the FAD-linked oxidoreductase hasG, convert the hasE-prenylated Trp-Ala-dipeptide into an O-methylated diketopiperazine that is then released from the hasD NRPS. The HAS biosynthesis begins with the synthesis of a tethered Trp-Ala dipeptide by the NRPS hasD. The 7-dimethylallyltryptophan synthase hasE then catalyzes the prenylation of the hasD-tethered tryptophan or the resulting tethered Trp-Ala dipeptide at the C-7 position of the indole moiety. HAS biosynthesis continues via tethered intermediates with the succesive actions of the cytochrome P450 monooxygenase hasH, the O-methyltransferase hasC, and the FAD-linked oxidoreductase hasG. The resulting O-methylated diketopiperazine is then released from hasD. Finally, three O-methylated diketopiperazine molecules assemble in a trimeric complex with Fe(III) to produce hexadehydro-astechrome. This is O-methyltransferase hasC from Aspergillus fumigatus (strain CBS 144.89 / FGSC A1163 / CEA10) (Neosartorya fumigata).